Consider the following 289-residue polypeptide: Agmatinase (289 aa).

Positions 112, 135, 137, 139, 216, and 218 each coordinate Mn(2+).

Belongs to the arginase family. Agmatinase subfamily. The cofactor is Mn(2+).

It carries out the reaction agmatine + H2O = urea + putrescine. It functions in the pathway amine and polyamine biosynthesis; putrescine biosynthesis via agmatine pathway; putrescine from agmatine: step 1/1. Catalyzes the formation of putrescine from agmatine. The protein is Agmatinase (speB) of Halalkalibacterium halodurans (strain ATCC BAA-125 / DSM 18197 / FERM 7344 / JCM 9153 / C-125) (Bacillus halodurans).